The sequence spans 287 residues: 4-diphosphocytidyl-2-C-methyl-D-erythritol kinase (287 aa).

Lys10 is a catalytic residue. 94–104 (PVAAGLGGGSA) contributes to the ATP binding site. Asp136 is an active-site residue.

This sequence belongs to the GHMP kinase family. IspE subfamily.

The catalysed reaction is 4-CDP-2-C-methyl-D-erythritol + ATP = 4-CDP-2-C-methyl-D-erythritol 2-phosphate + ADP + H(+). The protein operates within isoprenoid biosynthesis; isopentenyl diphosphate biosynthesis via DXP pathway; isopentenyl diphosphate from 1-deoxy-D-xylulose 5-phosphate: step 3/6. Its function is as follows. Catalyzes the phosphorylation of the position 2 hydroxy group of 4-diphosphocytidyl-2C-methyl-D-erythritol. In Pelotomaculum thermopropionicum (strain DSM 13744 / JCM 10971 / SI), this protein is 4-diphosphocytidyl-2-C-methyl-D-erythritol kinase.